Here is a 348-residue protein sequence, read N- to C-terminus: UDP-glucose 4-epimerase (348 aa).

NAD(+) contacts are provided by residues G12–I14, D33–N37, D66–I67, F88, and K92. S132–T134 serves as a coordination point for substrate. Y157 functions as the Proton acceptor in the catalytic mechanism. K161 and Y185 together coordinate NAD(+). Residues Y185–N187, N206–L208, N224–F226, R239, and R300–D303 each bind substrate.

This sequence belongs to the NAD(P)-dependent epimerase/dehydratase family. As to quaternary structure, homodimer. It depends on NAD(+) as a cofactor.

It catalyses the reaction UDP-alpha-D-glucose = UDP-alpha-D-galactose. The catalysed reaction is UDP-N-acetyl-alpha-D-glucosamine = UDP-N-acetyl-alpha-D-galactosamine. It functions in the pathway carbohydrate metabolism; galactose metabolism. Catalyzes two distinct but analogous reactions: the reversible epimerization of UDP-glucose to UDP-galactose and the reversible epimerization of UDP-N-acetylglucosamine to UDP-N-acetylgalactosamine. The reaction with UDP-Gal plays a critical role in the Leloir pathway of galactose catabolism in which galactose is converted to the glycolytic intermediate glucose 6-phosphate. It contributes to the catabolism of dietary galactose and enables the endogenous biosynthesis of both UDP-Gal and UDP-GalNAc when exogenous sources are limited. Both UDP-sugar interconversions are important in the synthesis of glycoproteins and glycolipids. This Bos taurus (Bovine) protein is UDP-glucose 4-epimerase.